The sequence spans 350 residues: S-adenosylmethionine:tRNA ribosyltransferase-isomerase (350 aa).

It belongs to the QueA family. Monomer.

Its subcellular location is the cytoplasm. It carries out the reaction 7-aminomethyl-7-carbaguanosine(34) in tRNA + S-adenosyl-L-methionine = epoxyqueuosine(34) in tRNA + adenine + L-methionine + 2 H(+). The protein operates within tRNA modification; tRNA-queuosine biosynthesis. In terms of biological role, transfers and isomerizes the ribose moiety from AdoMet to the 7-aminomethyl group of 7-deazaguanine (preQ1-tRNA) to give epoxyqueuosine (oQ-tRNA). This chain is S-adenosylmethionine:tRNA ribosyltransferase-isomerase, found in Parvibaculum lavamentivorans (strain DS-1 / DSM 13023 / NCIMB 13966).